A 96-amino-acid chain; its full sequence is MEQAPEDQGPQREPYNEWTLELLEELKNEAVRHFPRIWLHSLGQYIYETYGDTWAGVEAIIRILQQLLFIHFRIGCRHSRIGITRQRRARNGASRS.

The segment at 1–42 (MEQAPEDQGPQREPYNEWTLELLEELKNEAVRHFPRIWLHSL) is homooligomerization. A phosphoserine; by host mark is found at Ser79, Ser94, and Ser96.

This sequence belongs to the HIV-1 VPR protein family. Homooligomer, may form homodimer. Interacts with p6-gag region of the Pr55 Gag precursor protein through a (Leu-X-X)4 motif near the C-terminus of the P6gag protein. Interacts with host UNG. May interact with host RAD23A/HHR23A. Interacts with host VPRBP/DCAF1, leading to hijack the CUL4A-RBX1-DDB1-DCAF1/VPRBP complex, mediating ubiquitination of host proteins such as TERT and ZGPAT and arrest of the cell cycle in G2 phase. In terms of processing, phosphorylated on several residues by host. These phosphorylations regulate VPR activity for the nuclear import of the HIV-1 pre-integration complex.

The protein resides in the virion. The protein localises to the host nucleus. It is found in the host extracellular space. In terms of biological role, during virus replication, may deplete host UNG protein, and incude G2-M cell cycle arrest. Acts by targeting specific host proteins for degradation by the 26S proteasome, through association with the cellular CUL4A-DDB1 E3 ligase complex by direct interaction with host VPRPB/DCAF-1. Cell cycle arrest reportedly occurs within hours of infection and is not blocked by antiviral agents, suggesting that it is initiated by the VPR carried into the virion. Additionally, VPR induces apoptosis in a cell cycle dependent manner suggesting that these two effects are mechanistically linked. Detected in the serum and cerebrospinal fluid of AIDS patient, VPR may also induce cell death to bystander cells. During virus entry, plays a role in the transport of the viral pre-integration (PIC) complex to the host nucleus. This function is crucial for viral infection of non-dividing macrophages. May act directly at the nuclear pore complex, by binding nucleoporins phenylalanine-glycine (FG)-repeat regions. The chain is Protein Vpr from Homo sapiens (Human).